A 401-amino-acid chain; its full sequence is Mannan endo-1,4-beta-mannosidase 3 (401 aa).

The N-terminal stretch at 1–24 is a signal peptide; the sequence is MSYTHRRSCISGLFLLLLALSCEA. Residues Trp-84 and Asn-198 each coordinate substrate. Residue Glu-199 is the Proton donor of the active site. Tyr-277 contacts substrate. Glu-317 (nucleophile) is an active-site residue. Trp-356 is a binding site for substrate.

This sequence belongs to the glycosyl hydrolase 5 (cellulase A) family.

It localises to the secreted. It carries out the reaction Random hydrolysis of (1-&gt;4)-beta-D-mannosidic linkages in mannans, galactomannans and glucomannans.. This is Mannan endo-1,4-beta-mannosidase 3 (MAN3) from Solanum lycopersicum (Tomato).